Here is a 1029-residue protein sequence, read N- to C-terminus: Probable E3 ubiquitin protein ligase C167.07c (1029 aa).

In terms of domain architecture, IQ spans 46–75 (AENNSVAVQSLSRGFLARRKFKQDFRERWI). The HECT domain occupies 692–1029 (FGKLLKGPIR…VRSGVGFGFS (338 aa)). Cys-997 (glycyl thioester intermediate) is an active-site residue.

Its subcellular location is the cytoplasm. It localises to the nucleus. It carries out the reaction S-ubiquitinyl-[E2 ubiquitin-conjugating enzyme]-L-cysteine + [acceptor protein]-L-lysine = [E2 ubiquitin-conjugating enzyme]-L-cysteine + N(6)-ubiquitinyl-[acceptor protein]-L-lysine.. Functionally, probable E3 ubiquitin-protein ligase which mediates ubiquitination and subsequent proteasomal degradation of target proteins. This Schizosaccharomyces pombe (strain 972 / ATCC 24843) (Fission yeast) protein is Probable E3 ubiquitin protein ligase C167.07c.